The chain runs to 437 residues: Type II methylase M.HgiEI (437 aa).

Positions 4–431 constitute an SAM-dependent MTase C5-type domain; the sequence is FRFIDLFAGI…KRLQCVKLFE (428 aa). C75 is a catalytic residue.

It belongs to the class I-like SAM-binding methyltransferase superfamily. C5-methyltransferase family.

It carries out the reaction a 2'-deoxycytidine in DNA + S-adenosyl-L-methionine = a 5-methyl-2'-deoxycytidine in DNA + S-adenosyl-L-homocysteine + H(+). A methylase that recognizes the double-stranded sequence 5'-GGWCC-3', methylates C-? on both strands, and protects the DNA from cleavage by the HgiEI endonuclease. This system is more active than isoschizomeric RM.HgiBI. The chain is Type II methylase M.HgiEI from Herpetosiphon aurantiacus (Herpetosiphon giganteus).